Here is a 152-residue protein sequence, read N- to C-terminus: Xanthine-guanine phosphoribosyltransferase (152 aa).

5-phospho-alpha-D-ribose 1-diphosphate is bound by residues 37-38 (RG), Arg69, and 88-96 (DDLVDSGDT). A GMP-binding site is contributed by Arg69. Mg(2+) is bound at residue Asp89. Guanine-binding residues include Asp92 and Ile135. Asp92 and Ile135 together coordinate xanthine. GMP-binding positions include 92–96 (DSGDT) and 134–135 (WI).

It belongs to the purine/pyrimidine phosphoribosyltransferase family. XGPT subfamily. As to quaternary structure, homotetramer. Requires Mg(2+) as cofactor.

The protein localises to the cell inner membrane. The catalysed reaction is GMP + diphosphate = guanine + 5-phospho-alpha-D-ribose 1-diphosphate. The enzyme catalyses XMP + diphosphate = xanthine + 5-phospho-alpha-D-ribose 1-diphosphate. It carries out the reaction IMP + diphosphate = hypoxanthine + 5-phospho-alpha-D-ribose 1-diphosphate. The protein operates within purine metabolism; GMP biosynthesis via salvage pathway; GMP from guanine: step 1/1. Its pathway is purine metabolism; XMP biosynthesis via salvage pathway; XMP from xanthine: step 1/1. Its function is as follows. Purine salvage pathway enzyme that catalyzes the transfer of the ribosyl-5-phosphate group from 5-phospho-alpha-D-ribose 1-diphosphate (PRPP) to the N9 position of the 6-oxopurines guanine and xanthine to form the corresponding ribonucleotides GMP (guanosine 5'-monophosphate) and XMP (xanthosine 5'-monophosphate), with the release of PPi. To a lesser extent, also acts on hypoxanthine. This is Xanthine-guanine phosphoribosyltransferase from Aliivibrio fischeri (strain ATCC 700601 / ES114) (Vibrio fischeri).